The primary structure comprises 232 residues: RNA chaperone ProQ (232 aa).

The tract at residues 105 to 182 is disordered; the sequence is EAKARVQAQR…REEQHTPVSD (78 aa). Positions 117–136 are enriched in basic and acidic residues; sequence QQAKKREAAAAAGEKEDAPR. Basic residues predominate over residues 137–146; the sequence is RERKPRPTTP. Residues 147-177 are compositionally biased toward basic and acidic residues; sequence RRKEGAERKPRAQKPVEKAPKTAKAPREEQH.

The protein belongs to the ProQ family.

It is found in the cytoplasm. RNA chaperone with significant RNA binding, RNA strand exchange and RNA duplexing activities. May regulate ProP activity through an RNA-based, post-transcriptional mechanism. This chain is RNA chaperone ProQ, found in Shigella dysenteriae serotype 1 (strain Sd197).